A 203-amino-acid polypeptide reads, in one-letter code: Large ribosomal subunit protein bL25 (203 aa).

The segment at 182 to 203 is disordered; it reads EITEEPETEEKKEEGASSVSNS.

Belongs to the bacterial ribosomal protein bL25 family. CTC subfamily. Part of the 50S ribosomal subunit; part of the 5S rRNA/L5/L18/L25 subcomplex. Contacts the 5S rRNA. Binds to the 5S rRNA independently of L5 and L18.

In terms of biological role, this is one of the proteins that binds to the 5S RNA in the ribosome where it forms part of the central protuberance. The polypeptide is Large ribosomal subunit protein bL25 (Caldicellulosiruptor saccharolyticus (strain ATCC 43494 / DSM 8903 / Tp8T 6331)).